Consider the following 470-residue polypeptide: Histidine--tRNA ligase (470 aa).

Belongs to the class-II aminoacyl-tRNA synthetase family. As to quaternary structure, homodimer.

Its subcellular location is the cytoplasm. It carries out the reaction tRNA(His) + L-histidine + ATP = L-histidyl-tRNA(His) + AMP + diphosphate + H(+). This chain is Histidine--tRNA ligase, found in Xanthomonas oryzae pv. oryzae (strain PXO99A).